A 419-amino-acid polypeptide reads, in one-letter code: D-galactonate dehydratase family member SEN1436 (419 aa).

Substrate-binding residues include Gln45 and His129. The active-site Proton donor/acceptor is Tyr160. Asp225 contacts Mg(2+). The Proton donor/acceptor role is filled by His227. Mg(2+)-binding residues include Glu251 and Glu277. 5 residues coordinate substrate: Glu277, Arg298, His327, Asp331, and Glu354.

It belongs to the mandelate racemase/muconate lactonizing enzyme family. GalD subfamily. In terms of assembly, homotetramer. Mg(2+) serves as cofactor.

It catalyses the reaction D-gluconate = 2-dehydro-3-deoxy-D-gluconate + H2O. Functionally, has low D-gluconate dehydratase activity (in vitro), suggesting that it has no significant role in D-gluconate degradation in vivo. Has no detectable activity with a panel of 70 other acid sugars (in vitro). In Salmonella enteritidis PT4 (strain P125109), this protein is D-galactonate dehydratase family member SEN1436.